A 461-amino-acid polypeptide reads, in one-letter code: Polycomb group protein FIE1 (461 aa).

The span at 1–11 (MPPSKARRKRS) shows a compositional bias: basic residues. A disordered region spans residues 1 to 56 (MPPSKARRKRSLRDITATVATGTVANSKPGSSSTNEGKQQDKKKEGPQEPDIPPLP). Polar residues predominate over residues 18–37 (TVATGTVANSKPGSSSTNEG). Residues 38 to 47 (KQQDKKKEGP) show a composition bias toward basic and acidic residues. 6 WD repeats span residues 143 to 186 (DKDE…LDKS), 189 to 229 (GHGG…CILV), 235 to 275 (GHRH…IYVE), 301 to 338 (VHSD…RRPG), 351 to 391 (PKCS…PVLI), and 398 to 437 (ECKS…ASSS). A disordered region spans residues 429-461 (EVDPAASSSKPDQAAAPAAGVGAGAGADADADA). Over residues 432–448 (PAASSSKPDQAAAPAAG) the composition is skewed to low complexity.

The protein belongs to the WD repeat ESC family. In terms of tissue distribution, specifically expressed in kernel starting from 6 days after pollination.

The protein localises to the nucleus. In terms of biological role, polycomb group (PcG) protein. PcG proteins act by forming multiprotein complexes, which are required to maintain the transcriptionally repressive state of homeotic genes throughout development. PcG proteins are not required to initiate repression, but to maintain it during later stages of development. They probably act via the methylation of histones, rendering chromatin heritably changed in its expressibility. The protein is Polycomb group protein FIE1 (FIE1) of Zea mays (Maize).